The following is a 477-amino-acid chain: Stromelysin-3 (477 aa).

Positions 1–17 are cleaved as a signal peptide; it reads MHLLILLPALCVLGAHS. Residues 18–85 constitute a propeptide, activation peptide; the sequence is APLSYTYLQH…SSSGRNRQKR (68 aa). The segment at 64–83 is disordered; sequence RCGVPDIPAPPDSSSGRNRQ. Residues C65, H152, and D154 each coordinate Zn(2+). D159, G160, G162, and I164 together coordinate Ca(2+). 3 residues coordinate Zn(2+): H167, H180, and H203. E204 is a catalytic residue. Residues H207 and H213 each contribute to the Zn(2+) site. C279 and C466 are disulfide-bonded. 4 Hemopexin repeats span residues 280-324, 325-369, 370-418, and 419-466; these read KTNF…WRGI, PDTV…GISV, TQIQ…WRGV, and PKGI…FFNC.

It belongs to the peptidase M10A family. Ca(2+) serves as cofactor. Requires Zn(2+) as cofactor. In terms of tissue distribution, expressed in fibroblast cells that are activated by thyroid hormone. High levels in resorbing tail.

The protein localises to the secreted. The protein resides in the extracellular space. Its subcellular location is the extracellular matrix. In terms of biological role, may be involved in the modification of the extracellular matrix during metamorphic apoptosis. The protein is Stromelysin-3 (mmp11) of Xenopus laevis (African clawed frog).